Here is a 407-residue protein sequence, read N- to C-terminus: Imidazolonepropionase (407 aa).

2 residues coordinate Fe(3+): His74 and His76. Zn(2+) contacts are provided by His74 and His76. 3 residues coordinate 4-imidazolone-5-propanoate: Arg83, Tyr146, and His179. Tyr146 lines the N-formimidoyl-L-glutamate pocket. Fe(3+) is bound at residue His244. Residue His244 coordinates Zn(2+). Gln247 provides a ligand contact to 4-imidazolone-5-propanoate. Position 319 (Asp319) interacts with Fe(3+). Residue Asp319 participates in Zn(2+) binding. The N-formimidoyl-L-glutamate site is built by Asn321 and Gly323. Residue Thr324 coordinates 4-imidazolone-5-propanoate.

Belongs to the metallo-dependent hydrolases superfamily. HutI family. Zn(2+) serves as cofactor. Requires Fe(3+) as cofactor.

Its subcellular location is the cytoplasm. It carries out the reaction 4-imidazolone-5-propanoate + H2O = N-formimidoyl-L-glutamate. It functions in the pathway amino-acid degradation; L-histidine degradation into L-glutamate; N-formimidoyl-L-glutamate from L-histidine: step 3/3. Catalyzes the hydrolytic cleavage of the carbon-nitrogen bond in imidazolone-5-propanoate to yield N-formimidoyl-L-glutamate. It is the third step in the universal histidine degradation pathway. In Salmonella enteritidis PT4 (strain P125109), this protein is Imidazolonepropionase.